Reading from the N-terminus, the 389-residue chain is Chalcone synthase 1 (389 aa).

The active site involves Cys-164.

This sequence belongs to the thiolase-like superfamily. Chalcone/stilbene synthases family.

The enzyme catalyses (E)-4-coumaroyl-CoA + 3 malonyl-CoA + 3 H(+) = 2',4,4',6'-tetrahydroxychalcone + 3 CO2 + 4 CoA. It functions in the pathway secondary metabolite biosynthesis; flavonoid biosynthesis. In terms of biological role, the primary product of this enzyme is 4,2',4',6'-tetrahydroxychalcone (also termed naringenin-chalcone or chalcone) which can under specific conditions spontaneously isomerize into naringenin. This is Chalcone synthase 1 (CHS1) from Camellia sinensis (Tea plant).